The primary structure comprises 478 residues: Isoeugenol monooxygenase (478 aa).

Fe cation contacts are provided by H167, H218, H282, and H471.

This sequence belongs to the carotenoid oxygenase family. Fe(2+) is required as a cofactor.

The catalysed reaction is (E)-isoeugenol + O2 = vanillin + acetaldehyde. With respect to regulation, inhibited by Co(2+), Ni(2+) and Zn(2+), which may inhibit enzyme activity by replacing iron in the catalytic residues. Inhibited by incubation with high concentrations of the iron chelators 1,10-phenanthroline and Tiron. However, iron is not completely removed by the chelators, suggesting that iron is tightly bound to the enzyme. Functionally, involved in isoeugenol degradation. Catalyzes the oxidative cleavage of the side chain double-bond of isoeugenol to form vanillin and acetaldehyde. In Pseudomonas nitroreducens, this protein is Isoeugenol monooxygenase.